A 163-amino-acid polypeptide reads, in one-letter code: Phosphopantetheine adenylyltransferase (163 aa).

Threonine 9 serves as a coordination point for substrate. Residues 9-10 (TF) and histidine 17 contribute to the ATP site. Substrate is bound by residues lysine 41, leucine 76, and arginine 90. ATP contacts are provided by residues 91 to 93 (GLR), glutamate 101, and 126 to 132 (HQAIASR).

This sequence belongs to the bacterial CoaD family. As to quaternary structure, homohexamer. Requires Mg(2+) as cofactor.

The protein resides in the cytoplasm. The catalysed reaction is (R)-4'-phosphopantetheine + ATP + H(+) = 3'-dephospho-CoA + diphosphate. Its pathway is cofactor biosynthesis; coenzyme A biosynthesis; CoA from (R)-pantothenate: step 4/5. In terms of biological role, reversibly transfers an adenylyl group from ATP to 4'-phosphopantetheine, yielding dephospho-CoA (dPCoA) and pyrophosphate. The polypeptide is Phosphopantetheine adenylyltransferase (Caulobacter vibrioides (strain ATCC 19089 / CIP 103742 / CB 15) (Caulobacter crescentus)).